The chain runs to 650 residues: SPARC-like protein 1 (650 aa).

An N-terminal signal peptide occupies residues 1 to 16 (MKAVLLLLCALGTAVA). The interval 51-352 (TADIENHPSD…HGAGDDYFIP (302 aa)) is disordered. The segment covering 54–64 (IENHPSDKAEK) has biased composition (basic and acidic residues). 3 positions are modified to phosphoserine: serine 70, serine 78, and serine 86. Residues 75 to 85 (HEQSTEQDKTY) show a composition bias toward basic and acidic residues. The segment covering 91–101 (LKDEEDGDGDL) has biased composition (acidic residues). 2 stretches are compositionally biased toward polar residues: residues 116 to 126 (EGTSEPQQKSL) and 135 to 148 (TVST…QRAN). The N-linked (GlcNAc...) asparagine glycan is linked to asparagine 148. A phosphoserine mark is found at serine 155 and serine 163. Polar residues predominate over residues 157–174 (EQPVSDSHQQPNESSKQT). Residue asparagine 168 is glycosylated (N-linked (GlcNAc...) asparagine). A compositionally biased stretch (acidic residues) spans 189-210 (IPNEEEEEEEDEEEEEEEEPED). Serine 272 is subject to Phosphoserine. Basic and acidic residues predominate over residues 277–299 (EDKAAGSKEHIPHTEQQDQEGKA). Phosphoserine is present on serine 353. The segment at 375 to 415 (EETTTGESENRREAADNQEAKKAESSPNAEPSDEGNSREHS) is disordered. A compositionally biased stretch (basic and acidic residues) spans 382–398 (SENRREAADNQEAKKAE). Phosphoserine is present on serine 406. The Follistatin-like domain maps to 418-440 (SCTNFQCKRGHICKTDPQGKPHC). Cystine bridges form between cysteine 419/cysteine 430, cysteine 424/cysteine 440, cysteine 442/cysteine 476, cysteine 448/cysteine 469, cysteine 458/cysteine 495, cysteine 501/cysteine 612, and cysteine 620/cysteine 636. A Kazal-like domain is found at 436–497 (GKPHCVCQDP…QLDYFGACKS (62 aa)). An N-linked (GlcNAc...) asparagine glycan is attached at asparagine 462. The EF-hand domain maps to 608 to 643 (PMEHCITRFFEECDPNKDKHITLKEWGHCFGIKEED). Positions 621, 623, 625, 627, and 632 each coordinate Ca(2+).

This sequence belongs to the SPARC family. As to expression, highest expression in brain. Moderate levels in heart, adrenal gland, epididymis and lung. Low levels in kidney, eye, liver, spleen, submandibular gland and testis.

The protein resides in the secreted. Its subcellular location is the extracellular space. It is found in the extracellular matrix. In Mus musculus (Mouse), this protein is SPARC-like protein 1 (Sparcl1).